A 221-amino-acid polypeptide reads, in one-letter code: Tetraspanin-2 (221 aa).

The Cytoplasmic portion of the chain corresponds to methionine 1 to tyrosine 13. Residues leucine 14–leucine 34 traverse the membrane as a helical segment. The Extracellular segment spans residues tryptophan 35–tyrosine 54. A helical membrane pass occupies residues phenylalanine 55 to phenylalanine 75. The Cytoplasmic portion of the chain corresponds to glycine 76–serine 90. A helical membrane pass occupies residues phenylalanine 91 to isoleucine 111. The Extracellular portion of the chain corresponds to glycine 112–leucine 188. Asparagine 139 carries an N-linked (GlcNAc...) asparagine glycan. The chain crosses the membrane as a helical span at residues isoleucine 189–valine 209. Residues leucine 210–isoleucine 221 are Cytoplasmic-facing.

Belongs to the tetraspanin (TM4SF) family.

It is found in the membrane. Functionally, may play a role in signalling in oligodendrocytes in the early stages of their terminal differentiation into myelin-forming glia and may also function in stabilizing the mature sheath. The protein is Tetraspanin-2 (Tspan2) of Mus musculus (Mouse).